A 305-amino-acid polypeptide reads, in one-letter code: Probable cell division protein WhiA (305 aa).

The H-T-H motif DNA-binding region spans 269–302 (TIKELGELLEPSLGKSGVNHRLRKLVEQANELRK).

It belongs to the WhiA family.

Involved in cell division and chromosome segregation. This Lactococcus lactis subsp. lactis (strain IL1403) (Streptococcus lactis) protein is Probable cell division protein WhiA.